We begin with the raw amino-acid sequence, 295 residues long: Protease HtpX (295 aa).

The next 2 membrane-spanning stretches (helical) occupy residues 4-24 (ILLF…TLSL) and 41-61 (GQLL…SLFI). His147 is a Zn(2+) binding site. Glu148 is an active-site residue. His151 is a binding site for Zn(2+). 2 consecutive transmembrane segments (helical) span residues 158-178 (VTMA…ARII) and 198-218 (FVAT…IVMW). Residue Glu224 coordinates Zn(2+).

It belongs to the peptidase M48B family. Zn(2+) is required as a cofactor.

The protein localises to the cell inner membrane. This Pseudomonas entomophila (strain L48) protein is Protease HtpX.